Reading from the N-terminus, the 313-residue chain is Ribosomal RNA small subunit methyltransferase H (313 aa).

S-adenosyl-L-methionine is bound by residues 51–53 (GGH), D71, F98, D119, and Q126. The segment at 293–313 (EEQRANPRSRSARLRVAERVS) is disordered.

This sequence belongs to the methyltransferase superfamily. RsmH family.

The protein localises to the cytoplasm. The enzyme catalyses cytidine(1402) in 16S rRNA + S-adenosyl-L-methionine = N(4)-methylcytidine(1402) in 16S rRNA + S-adenosyl-L-homocysteine + H(+). In terms of biological role, specifically methylates the N4 position of cytidine in position 1402 (C1402) of 16S rRNA. The polypeptide is Ribosomal RNA small subunit methyltransferase H (Roseiflexus sp. (strain RS-1)).